Consider the following 141-residue polypeptide: Protein X (141 aa).

Positions 25–52 are disordered; sequence SSGPSFPRPAAGSAASSASSPSPSDDSD. Residues 68-113 form a mitochondrial targeting sequence region; sequence PCCLVFTCADLRTMDSTVNFVSWHANRQLGMPSKDLWTPYIKDQLL.

The protein belongs to the orthohepadnavirus protein X family. May form homodimer. May interact with host CEBPA, CFLAR, CREB1, DDB1, E4F1, HBXIP, HSPD1/HSP60, NFKBIA, POLR2E and SMAD4. Interacts with host SMC5-SMC6 complex and induces its degradation. Interacts with host TRPC4AP; leading to prevent ubiquitination of TRPC4AP. Interacts with host PLSCR1; this interaction promotes ubiquitination and degradation of HBx and impairs HBx-mediated cell proliferation. In terms of processing, a fraction may be phosphorylated in insect cells and HepG2 cells, a human hepatoblastoma cell line. Phosphorylated in vitro by host protein kinase C or mitogen-activated protein kinase. N-acetylated in insect cells.

The protein localises to the host cytoplasm. It localises to the host nucleus. The protein resides in the host mitochondrion. Its function is as follows. Multifunctional protein that plays a role in silencing host antiviral defenses and promoting viral transcription. Does not seem to be essential for HBV infection. May be directly involved in development of cirrhosis and liver cancer (hepatocellular carcinoma). Most of cytosolic activities involve modulation of cytosolic calcium. The effect on apoptosis is controversial depending on the cell types in which the studies have been conducted. May induce apoptosis by localizing in mitochondria and causing loss of mitochondrial membrane potential. May also modulate apoptosis by binding host CFLAR, a key regulator of the death-inducing signaling complex (DISC). Promotes viral transcription by using the host E3 ubiquitin ligase DDB1 to target the SMC5-SMC6 complex to proteasomal degradation. This host complex would otherwise bind to viral episomal DNA, and prevents its transcription. Moderately stimulates transcription of many different viral and cellular transcription elements. Promoters and enhancers stimulated by HBx contain DNA binding sites for NF-kappa-B, AP-1, AP-2, c-EBP, ATF/CREB, or the calcium-activated factor NF-AT. This Woodchuck hepatitis B virus (isolate 2) (WHV) protein is Protein X.